We begin with the raw amino-acid sequence, 255 residues long: Small ribosomal subunit protein eS1 (255 aa).

Positions 1–18 (MAVGKNKRLSKGKKGLKK) are enriched in basic residues. Residues 1–28 (MAVGKNKRLSKGKKGLKKRTQDPFSRKD) form a disordered region. A2 is subject to N-acetylalanine; partial. Residues 19–28 (RTQDPFSRKD) are compositionally biased toward basic and acidic residues.

Belongs to the eukaryotic ribosomal protein eS1 family. Component of the small ribosomal subunit. Mature ribosomes consist of a small (40S) and a large (60S) subunit. The 40S subunit contains about 33 different proteins and 1 molecule of RNA (18S). The 60S subunit contains about 49 different proteins and 3 molecules of RNA (25S, 5.8S and 5S).

It localises to the cytoplasm. The protein is Small ribosomal subunit protein eS1 of Ajellomyces capsulatus (strain NAm1 / WU24) (Darling's disease fungus).